A 182-amino-acid chain; its full sequence is Ribosome maturation factor RimM (182 aa).

Residues 103–182 (EDEFYWRELF…RIEVDWDPAF (80 aa)) enclose the PRC barrel domain.

Belongs to the RimM family. Binds ribosomal protein uS19.

The protein resides in the cytoplasm. Its function is as follows. An accessory protein needed during the final step in the assembly of 30S ribosomal subunit, possibly for assembly of the head region. Essential for efficient processing of 16S rRNA. May be needed both before and after RbfA during the maturation of 16S rRNA. It has affinity for free ribosomal 30S subunits but not for 70S ribosomes. The protein is Ribosome maturation factor RimM of Vibrio cholerae serotype O1 (strain ATCC 39315 / El Tor Inaba N16961).